The primary structure comprises 374 residues: uncharacterized protein (374 aa).

Positions 298–332 form a coiled coil; sequence TKEKLLKLHSEQKSLSEKINKLSGEKDIEQSMINN.

This is an uncharacterized protein from Acanthamoeba polyphaga (Amoeba).